The chain runs to 232 residues: 2-C-methyl-D-erythritol 4-phosphate cytidylyltransferase (232 aa).

The protein belongs to the IspD/TarI cytidylyltransferase family. IspD subfamily.

It carries out the reaction 2-C-methyl-D-erythritol 4-phosphate + CTP + H(+) = 4-CDP-2-C-methyl-D-erythritol + diphosphate. Its pathway is isoprenoid biosynthesis; isopentenyl diphosphate biosynthesis via DXP pathway; isopentenyl diphosphate from 1-deoxy-D-xylulose 5-phosphate: step 2/6. Catalyzes the formation of 4-diphosphocytidyl-2-C-methyl-D-erythritol from CTP and 2-C-methyl-D-erythritol 4-phosphate (MEP). This chain is 2-C-methyl-D-erythritol 4-phosphate cytidylyltransferase, found in Geobacter metallireducens (strain ATCC 53774 / DSM 7210 / GS-15).